We begin with the raw amino-acid sequence, 419 residues long: Innexin-2 (419 aa).

The next 4 helical transmembrane spans lie at 33–53, 108–128, 184–204, and 270–290; these read AWFTPFVLVAMTLAISCKQYF, PLVLLFQAAMFVLPYHLWNLF, INYFLLKLGFIVNCILQMVLL, and LYICFYFWLIFVFVVTTAGMI.

Belongs to the pannexin family.

It localises to the cell membrane. It is found in the cell junction. Its subcellular location is the gap junction. Structural component of the gap junctions. In Caenorhabditis elegans, this protein is Innexin-2 (inx-2).